We begin with the raw amino-acid sequence, 688 residues long: Protein sel-1 homolog 2 (688 aa).

A signal peptide spans 1–18 (MNPLALLVEILIIIEVTT). At 19-662 (KNTEAERYNR…KWKWLKLDST (644 aa)) the chain is on the extracellular side. N-linked (GlcNAc...) asparagine glycosylation occurs at asparagine 34. Sel1-like repeat units lie at residues 107 to 142 (GDELFKMGNKILQESKSQKQKTEAYTLFTRAANMGN), 143 to 178 (LKAMEKMADAWLFGSFGMQNITAAIQLYESLAKEGS), 179 to 214 (YKAQNALGFLSSYGIGMEYDQAKALIYYTFGSAGGS), 215 to 250 (MMSQMILGYRYLSGINVLQNCEVALNHYKKVADYIA), 297 to 333 (VQIQVSLGQLHLIGRKGLDQDYSKALYYFLKAAKAGS), 334 to 370 (ANAMAFIGKMYFEGNAAAPQNNATAFKYFSMAASKGN), 371 to 406 (AIGLHGLGLLYFHGKGVPVNYGEALKYFQKAAEKGW), 407 to 442 (PNAQFQLGFMYYSGSGVWKDYKLAFKYFYLASQSGQ), 443 to 478 (PLAIYYLAEMYATGTGVLRSCRTAVELYKGVCELGH), 551 to 586 (AFARVKIGDYHYYGYGTKKDYETAATHYSIAADKHH), and 588 to 623 (AQAMFNLAYMYEHGLGIAKDIHLARRLYDMAAQTSP). The N-linked (GlcNAc...) asparagine glycan is linked to asparagine 162. Residues 663–683 (VGPYWDLLVIGLIVAMLIFLL) form a helical membrane-spanning segment. The Cytoplasmic portion of the chain corresponds to 684–688 (RNRHR).

Belongs to the sel-1 family.

The protein resides in the membrane. The protein localises to the cell projection. It is found in the cilium. Its subcellular location is the nucleus speckle. The sequence is that of Protein sel-1 homolog 2 (Sel1l2) from Mus musculus (Mouse).